We begin with the raw amino-acid sequence, 318 residues long: GTP 3',8-cyclase (318 aa).

The Radical SAM core domain occupies 5–217 (KFERKIDYIR…DKIAKKYKFK (213 aa)). A GTP-binding site is contributed by Arg14. The [4Fe-4S] cluster site is built by Cys21 and Cys25. Tyr27 lines the S-adenosyl-L-methionine pocket. [4Fe-4S] cluster is bound at residue Cys28. Residue Arg64 participates in GTP binding. Gly68 serves as a coordination point for S-adenosyl-L-methionine. Residue Thr95 coordinates GTP. Residue Ser119 coordinates S-adenosyl-L-methionine. Residue Lys155 coordinates GTP. Residue Met189 participates in S-adenosyl-L-methionine binding. 2 residues coordinate [4Fe-4S] cluster: Cys248 and Cys251. 253-255 (RIR) serves as a coordination point for GTP. Residue Cys265 participates in [4Fe-4S] cluster binding.

The protein belongs to the radical SAM superfamily. MoaA family. In terms of assembly, monomer and homodimer. It depends on [4Fe-4S] cluster as a cofactor.

The catalysed reaction is GTP + AH2 + S-adenosyl-L-methionine = (8S)-3',8-cyclo-7,8-dihydroguanosine 5'-triphosphate + 5'-deoxyadenosine + L-methionine + A + H(+). Its pathway is cofactor biosynthesis; molybdopterin biosynthesis. Functionally, catalyzes the cyclization of GTP to (8S)-3',8-cyclo-7,8-dihydroguanosine 5'-triphosphate. The sequence is that of GTP 3',8-cyclase from Nautilia profundicola (strain ATCC BAA-1463 / DSM 18972 / AmH).